The sequence spans 733 residues: MATKFPKFSQDLAQDPTTRRIWYGIATAHDFETHDGMTEENLYQKIFASHFGHLAIIFLWTSGTLFHVAWQGNFEQWIKDPLNVRPIAHAIWDPHFGQGAIDAFTQAGASNPVNIAYSGVYHWFYTIGMTTNADLYQGAVFLLILSSLFLFAGWLHLQPKFRPSLAWFKDAESRLNHHLAGLFGVSSLAWTGHLVHVAIPESRGVHVGWDNFLSVKPHPAGLMPFFTGNWGVYAQNPDTAGHVFGTSQGAGTAILTFLGGFHPQTESLWLTDIAHHHLAIAVLFIIAGHMYRTKFGIGHSIKEILNAHQPPSGKLGAGHKGLYDTVNNSLHFQLGLALASLGVITSLVAQHMYSLPSYAFIAKDYTTQAALYTHHQYIAGFLMVGAFAHGAIFFVRDYDPEANKDNVLYRMLEHKEALISHLSWVSLFLGFHTLGLYVHNDVVVAFGTPEKQILIEPVFAQFVQAASGKALYGFDVLLSNADSIASNASAAYLPGWLDAINSGSNSLFLNIGPGDFLVHHAIALGLHTTTLILVKGALDARGSKLMPDKKDFGYSFPCDGPGRGGTCDISAWDAFYLAMFWMLNTLGWLTFYWHWKHLGIWQGNVAQFNENSTYLMGWFRDYLWANSAQLINGYNPYGVNNLSVWAWMFLFGHLVWATGFMFLISWRGYWQELIETIVWAHERTPLANIVRWKDKPVALSIVQARLVGLAHFTVGYVLTYAAFLIASTSGKFG.

8 helical membrane-spanning segments follow: residues 46-69, 135-158, 175-199, 273-291, 330-353, 369-395, 417-439, and 516-534; these read IFASHFGHLAIIFLWTSGTLFHVA, LYQGAVFLLILSSLFLFAGWLHLQ, LNHHLAGLFGVSSLAWTGHLVHVAI, IAHHHLAIAVLFIIAGHMY, LHFQLGLALASLGVITSLVAQHMY, AALYTHHQYIAGFLMVGAFAHGAIFFV, ALISHLSWVSLFLGFHTLGLYVH, and FLVHHAIALGLHTTTLILV. [4Fe-4S] cluster-binding residues include cysteine 558 and cysteine 567. Helical transmembrane passes span 574-595 and 642-664; these read AFYLAMFWMLNTLGWLTFYWHW and LSVWAWMFLFGHLVWATGFMFLI. Histidine 653, methionine 661, and tyrosine 669 together coordinate chlorophyll a. Position 670 (tryptophan 670) interacts with phylloquinone. The helical transmembrane segment at 706 to 726 threads the bilayer; it reads LVGLAHFTVGYVLTYAAFLIA.

This sequence belongs to the PsaA/PsaB family. As to quaternary structure, the PsaA/B heterodimer binds the P700 chlorophyll special pair and subsequent electron acceptors. PSI consists of a core antenna complex that captures photons, and an electron transfer chain that converts photonic excitation into a charge separation. The cyanobacterial PSI reaction center is composed of one copy each of PsaA,B,C,D,E,F,I,J,K,L,M and X, and forms trimeric complexes. PSI electron transfer chain: 5 chlorophyll a, 1 chlorophyll a', 2 phylloquinones and 3 4Fe-4S clusters. PSI core antenna: 90 chlorophyll a, 22 carotenoids, 3 phospholipids and 1 galactolipid. P700 is a chlorophyll a/chlorophyll a' dimer, A0 is one or more chlorophyll a, A1 is one or both phylloquinones and FX is a shared 4Fe-4S iron-sulfur center. serves as cofactor.

It localises to the cellular thylakoid membrane. It catalyses the reaction reduced [plastocyanin] + hnu + oxidized [2Fe-2S]-[ferredoxin] = oxidized [plastocyanin] + reduced [2Fe-2S]-[ferredoxin]. Functionally, psaA and PsaB bind P700, the primary electron donor of photosystem I (PSI), as well as the electron acceptors A0, A1 and FX. PSI is a plastocyanin/cytochrome c6-ferredoxin oxidoreductase, converting photonic excitation into a charge separation, which transfers an electron from the donor P700 chlorophyll pair to the spectroscopically characterized acceptors A0, A1, FX, FA and FB in turn. Oxidized P700 is reduced on the lumenal side of the thylakoid membrane by plastocyanin or cytochrome c6. In Picosynechococcus sp. (strain ATCC 27264 / PCC 7002 / PR-6) (Agmenellum quadruplicatum), this protein is Photosystem I P700 chlorophyll a apoprotein A2.